We begin with the raw amino-acid sequence, 350 residues long: S-adenosylmethionine:tRNA ribosyltransferase-isomerase (350 aa).

The protein belongs to the QueA family. In terms of assembly, monomer.

It is found in the cytoplasm. It catalyses the reaction 7-aminomethyl-7-carbaguanosine(34) in tRNA + S-adenosyl-L-methionine = epoxyqueuosine(34) in tRNA + adenine + L-methionine + 2 H(+). Its pathway is tRNA modification; tRNA-queuosine biosynthesis. Its function is as follows. Transfers and isomerizes the ribose moiety from AdoMet to the 7-aminomethyl group of 7-deazaguanine (preQ1-tRNA) to give epoxyqueuosine (oQ-tRNA). This Saccharophagus degradans (strain 2-40 / ATCC 43961 / DSM 17024) protein is S-adenosylmethionine:tRNA ribosyltransferase-isomerase.